The sequence spans 90 residues: Probable Fe(2+)-trafficking protein (90 aa).

The protein belongs to the Fe(2+)-trafficking protein family. As to quaternary structure, monomer.

In terms of biological role, could be a mediator in iron transactions between iron acquisition and iron-requiring processes, such as synthesis and/or repair of Fe-S clusters in biosynthetic enzymes. This is Probable Fe(2+)-trafficking protein from Pectobacterium atrosepticum (strain SCRI 1043 / ATCC BAA-672) (Erwinia carotovora subsp. atroseptica).